Consider the following 179-residue polypeptide: 3-hydroxyanthranilate 3,4-dioxygenase 2 (179 aa).

Arg44 is a binding site for O2. 3 residues coordinate Fe cation: His48, Glu60, and His99. Residue Glu60 participates in substrate binding. 2 residues coordinate substrate: Arg103 and Glu113.

The protein belongs to the 3-HAO family. It depends on Fe(2+) as a cofactor.

Its subcellular location is the cytoplasm. The catalysed reaction is 3-hydroxyanthranilate + O2 = (2Z,4Z)-2-amino-3-carboxymuconate 6-semialdehyde. It participates in cofactor biosynthesis; NAD(+) biosynthesis; quinolinate from L-kynurenine: step 3/3. Functionally, catalyzes the oxidative ring opening of 3-hydroxyanthranilate to 2-amino-3-carboxymuconate semialdehyde, which spontaneously cyclizes to quinolinate. This is 3-hydroxyanthranilate 3,4-dioxygenase 2 (bna1-2) from Aspergillus oryzae (strain ATCC 42149 / RIB 40) (Yellow koji mold).